We begin with the raw amino-acid sequence, 199 residues long: Probable nicotinate-nucleotide adenylyltransferase (199 aa).

It belongs to the NadD family.

The enzyme catalyses nicotinate beta-D-ribonucleotide + ATP + H(+) = deamido-NAD(+) + diphosphate. It functions in the pathway cofactor biosynthesis; NAD(+) biosynthesis; deamido-NAD(+) from nicotinate D-ribonucleotide: step 1/1. In terms of biological role, catalyzes the reversible adenylation of nicotinate mononucleotide (NaMN) to nicotinic acid adenine dinucleotide (NaAD). The sequence is that of Probable nicotinate-nucleotide adenylyltransferase from Rhizobium johnstonii (strain DSM 114642 / LMG 32736 / 3841) (Rhizobium leguminosarum bv. viciae).